The sequence spans 232 residues: MAKLGKRTRAAREAFAGKEELSVEQAVALIKSAASAKFDETVEIAMNLGVDPRHADQMVRGVVGLPNGTGKTVRVAVFARGPKAEEAQAAGADIVGAEDLMETIQSGKIEFDRCIATPDMMPVVGRLGKILGPRNLMPNPKVGTVTMDVAQAVQNAKGGEVQFKVEKAGVIHAGVGKVSFDEAKLVENVRAFVDAVAKAKPAGAKGTYLKKIALSSTMGPGVSVDVASASGN.

It belongs to the universal ribosomal protein uL1 family. In terms of assembly, part of the 50S ribosomal subunit.

Its function is as follows. Binds directly to 23S rRNA. The L1 stalk is quite mobile in the ribosome, and is involved in E site tRNA release. Functionally, protein L1 is also a translational repressor protein, it controls the translation of the L11 operon by binding to its mRNA. In Ruegeria pomeroyi (strain ATCC 700808 / DSM 15171 / DSS-3) (Silicibacter pomeroyi), this protein is Large ribosomal subunit protein uL1.